The following is a 606-amino-acid chain: Aspartate--tRNA(Asp/Asn) ligase (606 aa).

Glutamate 172 contributes to the L-aspartate binding site. The tract at residues 196–199 (QLFK) is aspartate. Arginine 218 lines the L-aspartate pocket. ATP-binding positions include 218–220 (RDE) and glutamine 227. Histidine 448 serves as a coordination point for L-aspartate. Glutamate 482 lines the ATP pocket. Residue arginine 489 participates in L-aspartate binding. ATP is bound at residue 534–537 (GWDR).

It belongs to the class-II aminoacyl-tRNA synthetase family. Type 1 subfamily. In terms of assembly, homodimer.

It localises to the cytoplasm. It carries out the reaction tRNA(Asx) + L-aspartate + ATP = L-aspartyl-tRNA(Asx) + AMP + diphosphate. Aspartyl-tRNA synthetase with relaxed tRNA specificity since it is able to aspartylate not only its cognate tRNA(Asp) but also tRNA(Asn). Reaction proceeds in two steps: L-aspartate is first activated by ATP to form Asp-AMP and then transferred to the acceptor end of tRNA(Asp/Asn). The sequence is that of Aspartate--tRNA(Asp/Asn) ligase from Saccharopolyspora erythraea (strain ATCC 11635 / DSM 40517 / JCM 4748 / NBRC 13426 / NCIMB 8594 / NRRL 2338).